The primary structure comprises 267 residues: Lyso-ornithine lipid O-acyltransferase (267 aa).

Residues 7–27 (IFLVVAAMVALSLSLIPFQYL) traverse the membrane as a helical segment.

This sequence belongs to the 1-acyl-sn-glycerol-3-phosphate acyltransferase family. OlsA subfamily.

The protein resides in the membrane. The catalysed reaction is a lyso-ornithine lipid + a fatty acyl-[ACP] = an N(2)-[(3R)-3-(acyloxy)acyl]-L-ornithine lipid + holo-[ACP]. It functions in the pathway lipid metabolism. Catalyzes the second step in the formation of ornithine lipids, which are phosphorus-free membrane lipids. Uses acyl-acyl carrier protein (acyl-AcpP) as an acyl donor and converts lyso-ornithine lipid (LOL) into ornithine lipid (OL). The chain is Lyso-ornithine lipid O-acyltransferase from Brucella abortus (strain 2308).